Reading from the N-terminus, the 203-residue chain is Small ribosomal subunit protein uS4 (203 aa).

The S4 RNA-binding domain maps to 93–156 (QRLDNVVYRL…MKVPAILEAV (64 aa)).

Belongs to the universal ribosomal protein uS4 family. As to quaternary structure, part of the 30S ribosomal subunit. Contacts protein S5. The interaction surface between S4 and S5 is involved in control of translational fidelity.

One of the primary rRNA binding proteins, it binds directly to 16S rRNA where it nucleates assembly of the body of the 30S subunit. Its function is as follows. With S5 and S12 plays an important role in translational accuracy. The chain is Small ribosomal subunit protein uS4 from Lactococcus lactis subsp. cremoris (strain MG1363).